Reading from the N-terminus, the 473-residue chain is Inactive levansucrase (473 aa).

Positions 1–29 (MNIKKFAKQATVLTFTTALLAGGATQAFA) are cleaved as a signal peptide.

The protein belongs to the glycosyl hydrolase 68 family.

Its subcellular location is the secreted. The chain is Inactive levansucrase (sacB) from Geobacillus stearothermophilus (Bacillus stearothermophilus).